A 140-amino-acid polypeptide reads, in one-letter code: Profilin-1 (140 aa).

Ala-2 carries the N-acetylalanine modification. Ser-28 bears the Phosphoserine mark. Lys-54 participates in a covalent cross-link: Glycyl lysine isopeptide (Lys-Gly) (interchain with G-Cter in SUMO2); alternate. Lys-54 participates in a covalent cross-link: Glycyl lysine isopeptide (Lys-Gly) (interchain with G-Cter in ubiquitin); alternate. Phosphoserine occurs at positions 57 and 85. N6-acetyllysine occurs at positions 105 and 108. A Phosphotyrosine modification is found at Tyr-129. Ser-138 is modified (phosphoserine; by ROCK1).

Belongs to the profilin family. Found in a complex with XPO6, Ran, ACTB and PFN1. Interacts with ACTB. Interacts with VASP. Interacts with HTT. Interacts with SH3BGRL. Occurs in many kinds of cells as a complex with monomeric actin in a 1:1 ratio. Interacts with ACTMAP. Post-translationally, phosphorylation at Ser-138 reduces its affinity for G-actin and blocks its interaction with HTT, reducing its ability to inhibit androgen receptor (AR) and HTT aggregation. As to expression, expressed in epididymis (at protein level).

The protein resides in the cytoplasm. It localises to the cytoskeleton. Its function is as follows. Binds to actin and affects the structure of the cytoskeleton. At high concentrations, profilin prevents the polymerization of actin, whereas it enhances it at low concentrations. By binding to PIP2, it inhibits the formation of IP3 and DG. Inhibits androgen receptor (AR) and HTT aggregation and binding of G-actin is essential for its inhibition of AR. This chain is Profilin-1 (PFN1), found in Homo sapiens (Human).